Consider the following 307-residue polypeptide: Salivary glue protein Sgs-3 (307 aa).

The signal sequence occupies residues 1–23 (MKLTIATALASILLIGSANVANC). The disordered stretch occupies residues 56–257 (APPTQQSTTQ…PTTTKPTTPK (202 aa)).

In terms of processing, O-glycosylated by Pgnat9 in salivary glands. Specifically expressed in the salivary gland.

The protein localises to the secreted. The protein is Salivary glue protein Sgs-3 of Drosophila melanogaster (Fruit fly).